Consider the following 340-residue polypeptide: MYSIRLDALAQQLDAQLHGDGDIVITGVASMHSAKTGQITFLSDSRYREQLAETQASAVVLTEADLPYCQVAALVVKNPYLTYAHMAQLLDTTPQPATDIAPSAVIASDATLGQQVSIGANAVIESGAQLGDGVVIGPGCFVGKNARIGAGTRLWANVTIYHRVELGEHCLIQSGTVIGSDGFGYANDRGNWVKIPQLGTVRIGDQVEIGASTTIDRGALDDTVIGNGVIIDNQCQIAHNVVIGDNTAVAGGVIMAGSLKIGRYCMIGGASVINGHMEICDKVTVTGMGMVMRPITEPGVYSSGIPLQPNKVWRKTAALVMNIDEISKRLKAVERKVDNV.

Residue His239 is the Proton acceptor of the active site.

Belongs to the transferase hexapeptide repeat family. LpxD subfamily. As to quaternary structure, homotrimer.

The enzyme catalyses a UDP-3-O-[(3R)-3-hydroxyacyl]-alpha-D-glucosamine + a (3R)-hydroxyacyl-[ACP] = a UDP-2-N,3-O-bis[(3R)-3-hydroxyacyl]-alpha-D-glucosamine + holo-[ACP] + H(+). It catalyses the reaction UDP-3-O-[(3R)-3-hydroxytetradecanoyl]-alpha-D-glucosamine + (3R)-hydroxytetradecanoyl-[ACP] = UDP-2-N,3-O-bis[(3R)-3-hydroxytetradecanoyl]-alpha-D-glucosamine + holo-[ACP] + H(+). The protein operates within glycolipid biosynthesis; lipid IV(A) biosynthesis; lipid IV(A) from (3R)-3-hydroxytetradecanoyl-[acyl-carrier-protein] and UDP-N-acetyl-alpha-D-glucosamine: step 3/6. Functionally, catalyzes the N-acylation of UDP-3-O-(hydroxytetradecanoyl)glucosamine using 3-hydroxytetradecanoyl-ACP as the acyl donor. Is involved in the biosynthesis of lipid A, a phosphorylated glycolipid that anchors the lipopolysaccharide to the outer membrane of the cell. This Pectobacterium atrosepticum (strain SCRI 1043 / ATCC BAA-672) (Erwinia carotovora subsp. atroseptica) protein is UDP-3-O-(3-hydroxymyristoyl)glucosamine N-acyltransferase.